A 620-amino-acid chain; its full sequence is 1-deoxy-D-xylulose-5-phosphate synthase (620 aa).

Thiamine diphosphate is bound by residues histidine 80 and 121 to 123 (GHS). Aspartate 152 provides a ligand contact to Mg(2+). Thiamine diphosphate is bound by residues 153–154 (GA), asparagine 181, tyrosine 288, and glutamate 370. Residue asparagine 181 coordinates Mg(2+).

It belongs to the transketolase family. DXPS subfamily. Homodimer. It depends on Mg(2+) as a cofactor. Thiamine diphosphate serves as cofactor.

It catalyses the reaction D-glyceraldehyde 3-phosphate + pyruvate + H(+) = 1-deoxy-D-xylulose 5-phosphate + CO2. The protein operates within metabolic intermediate biosynthesis; 1-deoxy-D-xylulose 5-phosphate biosynthesis; 1-deoxy-D-xylulose 5-phosphate from D-glyceraldehyde 3-phosphate and pyruvate: step 1/1. Functionally, catalyzes the acyloin condensation reaction between C atoms 2 and 3 of pyruvate and glyceraldehyde 3-phosphate to yield 1-deoxy-D-xylulose-5-phosphate (DXP). The polypeptide is 1-deoxy-D-xylulose-5-phosphate synthase (Escherichia coli O157:H7).